A 225-amino-acid chain; its full sequence is UPF0173 metal-dependent hydrolase Aflv_0488 (225 aa).

The protein belongs to the UPF0173 family.

This chain is UPF0173 metal-dependent hydrolase Aflv_0488, found in Anoxybacillus flavithermus (strain DSM 21510 / WK1).